A 199-amino-acid polypeptide reads, in one-letter code: Protein GrpE (199 aa).

The disordered stretch occupies residues 1-40 (MEKKKHGTNSISEALKVKAAVEQETATPEPTPQSETESAD). Over residues 24–36 (ETATPEPTPQSET) the composition is skewed to polar residues.

It belongs to the GrpE family. In terms of assembly, homodimer.

The protein resides in the cytoplasm. In terms of biological role, participates actively in the response to hyperosmotic and heat shock by preventing the aggregation of stress-denatured proteins, in association with DnaK and GrpE. It is the nucleotide exchange factor for DnaK and may function as a thermosensor. Unfolded proteins bind initially to DnaJ; upon interaction with the DnaJ-bound protein, DnaK hydrolyzes its bound ATP, resulting in the formation of a stable complex. GrpE releases ADP from DnaK; ATP binding to DnaK triggers the release of the substrate protein, thus completing the reaction cycle. Several rounds of ATP-dependent interactions between DnaJ, DnaK and GrpE are required for fully efficient folding. This is Protein GrpE from Geotalea uraniireducens (strain Rf4) (Geobacter uraniireducens).